The chain runs to 453 residues: Ribulose bisphosphate carboxylase large chain (453 aa).

Positions 1 to 2 (MS) are excised as a propeptide. N-acetylproline is present on Pro3. N6,N6,N6-trimethyllysine is present on Lys14. Residues Asn123 and Thr173 each contribute to the substrate site. Catalysis depends on Lys175, which acts as the Proton acceptor. Substrate is bound at residue Lys177. 3 residues coordinate Mg(2+): Lys201, Asp203, and Glu204. Lys201 is modified (N6-carboxylysine). His294 serves as the catalytic Proton acceptor. Residues Arg295, His327, and Ser379 each coordinate substrate.

Belongs to the RuBisCO large chain family. Type I subfamily. Heterohexadecamer of 8 large chains and 8 small chains; disulfide-linked. The disulfide link is formed within the large subunit homodimers. It depends on Mg(2+) as a cofactor. In terms of processing, the disulfide bond which can form in the large chain dimeric partners within the hexadecamer appears to be associated with oxidative stress and protein turnover.

The protein resides in the plastid. Its subcellular location is the chloroplast. The catalysed reaction is 2 (2R)-3-phosphoglycerate + 2 H(+) = D-ribulose 1,5-bisphosphate + CO2 + H2O. The enzyme catalyses D-ribulose 1,5-bisphosphate + O2 = 2-phosphoglycolate + (2R)-3-phosphoglycerate + 2 H(+). Functionally, ruBisCO catalyzes two reactions: the carboxylation of D-ribulose 1,5-bisphosphate, the primary event in carbon dioxide fixation, as well as the oxidative fragmentation of the pentose substrate in the photorespiration process. Both reactions occur simultaneously and in competition at the same active site. In Galium elongatum (Great marsh bedstraw), this protein is Ribulose bisphosphate carboxylase large chain.